The primary structure comprises 40 residues: Large ribosomal subunit protein bL36B (40 aa).

It belongs to the bacterial ribosomal protein bL36 family.

This Clavibacter michiganensis subsp. michiganensis (strain NCPPB 382) protein is Large ribosomal subunit protein bL36B.